The following is a 590-amino-acid chain: Major surface protein MspTL (590 aa).

The N-terminal stretch at 1–19 (MKKILAFFLVFALAGAVFA) is a signal peptide.

The protein localises to the cell outer membrane. Major component of the outer membrane. This chain is Major surface protein MspTL (mspTL), found in Treponema lecithinolyticum.